The chain runs to 691 residues: MPRTHAIEDYRNFGIMAHIDAGKTTTTERILYYTGKSHKIGEVHEGAATMDWMEQEQERGITITSAATTCFWRDKRLNIIDTPGHVDFTIEVERSLRVLDGAVCVLDGNQGVEPQTETVWRQADKYDVPRVVFVNKMDKIGADFFKCVADIIDRVAGKPVCLQLPIGSENNFRGVIDLIKMKAIVWSGEALGANFSEEAIPADLAEQAAEYRTKLIEACVEMDDDAMTAYLDGVEPDEDTMRRLVRTAVQRRAFHPVLCGSAFKNKGVQPLLDAVVDYLPSPADRGEIKGIDYKTEEEVVRRPSDAEPFSMLAFKIMDDPHVGTITFCRIYSGKVESGANLLNSTRDKRERVGRMLLMHANNREDIKEAYAGDIVALAGLKDTRTGDTLCDPTKAVILEKMEFPEPVIEIAVEPKSKADQEKLGIALSKLAAEDPSFRVSTDPESGQTILKGMGELHLDIKVDILKRTYKVEANIGQPQVAYREKLTRRTEIDYTHKKQTGGTGQFARVKLVVEPNEPGAGYAFESKIVGGAVPKEYVPGVEKGLNSVLTAGILAGFPVVDIKVELIDGAYHEVDSSALAFEIASRAALREALQKGGSVLLEPVMKVEVVTPEDYTGSVIGDLNSRRGQIQGQDMRGNANVINAMVPLANMFGYVNQLRSFTQGRANFTMQFDHYEEVPRGEAEKVVAKYA.

Positions 8–283 (EDYRNFGIMA…AVVDYLPSPA (276 aa)) constitute a tr-type G domain. GTP-binding positions include 17 to 24 (AHIDAGKT), 81 to 85 (DTPGH), and 135 to 138 (NKMD).

This sequence belongs to the TRAFAC class translation factor GTPase superfamily. Classic translation factor GTPase family. EF-G/EF-2 subfamily.

It localises to the cytoplasm. Functionally, catalyzes the GTP-dependent ribosomal translocation step during translation elongation. During this step, the ribosome changes from the pre-translocational (PRE) to the post-translocational (POST) state as the newly formed A-site-bound peptidyl-tRNA and P-site-bound deacylated tRNA move to the P and E sites, respectively. Catalyzes the coordinated movement of the two tRNA molecules, the mRNA and conformational changes in the ribosome. The protein is Elongation factor G of Methylobacterium sp. (strain 4-46).